A 121-amino-acid polypeptide reads, in one-letter code: Large ribosomal subunit protein mL52 (121 aa).

The transit peptide at 1 to 22 directs the protein to the mitochondrion; it reads MAALGTWLSSVRRLHCSVVARA. The segment covering 98–109 has biased composition (basic and acidic residues); that stretch reads QEERKKEHDLKP. The interval 98 to 121 is disordered; the sequence is QEERKKEHDLKPKGTLLRSPLPNQ.

This sequence belongs to the mitochondrion-specific ribosomal protein mL52 family. As to quaternary structure, component of the mitochondrial ribosome large subunit (39S) which comprises a 16S rRNA and about 50 distinct proteins.

The protein localises to the mitochondrion. This Mus musculus (Mouse) protein is Large ribosomal subunit protein mL52 (Mrpl52).